The chain runs to 544 residues: Chaperonin GroEL 2 (544 aa).

Residues 29-32 (TLGP), 86-90 (DGTTT), G413, 479-481 (NAA), and D495 contribute to the ATP site.

The protein belongs to the chaperonin (HSP60) family. As to quaternary structure, forms a cylinder of 14 subunits composed of two heptameric rings stacked back-to-back. Interacts with the co-chaperonin GroES.

Its subcellular location is the cytoplasm. The enzyme catalyses ATP + H2O + a folded polypeptide = ADP + phosphate + an unfolded polypeptide.. In terms of biological role, together with its co-chaperonin GroES, plays an essential role in assisting protein folding. The GroEL-GroES system forms a nano-cage that allows encapsulation of the non-native substrate proteins and provides a physical environment optimized to promote and accelerate protein folding. The protein is Chaperonin GroEL 2 of Synechococcus sp. (strain WH7803).